A 305-amino-acid chain; its full sequence is tRNA dimethylallyltransferase (305 aa).

15 to 22 (GPTASGKS) contacts ATP. Residue 17 to 22 (TASGKS) coordinates substrate. Interaction with substrate tRNA regions lie at residues 40-43 (DSMQ) and 164-168 (QRIVR).

Belongs to the IPP transferase family. Monomer. The cofactor is Mg(2+).

It catalyses the reaction adenosine(37) in tRNA + dimethylallyl diphosphate = N(6)-dimethylallyladenosine(37) in tRNA + diphosphate. Its function is as follows. Catalyzes the transfer of a dimethylallyl group onto the adenine at position 37 in tRNAs that read codons beginning with uridine, leading to the formation of N6-(dimethylallyl)adenosine (i(6)A). In Sinorhizobium medicae (strain WSM419) (Ensifer medicae), this protein is tRNA dimethylallyltransferase.